Reading from the N-terminus, the 567-residue chain is Geranylgeranyl transferase type-2 subunit alpha (567 aa).

6 PFTA repeats span residues 44-78 (LDES…QLET), 88-122 (LVKA…RLPE), 124-158 (NWAR…QAAV), 159-193 (APAE…QLHP), 207-241 (VLLR…RAEP), and 363-397 (VLQS…ALDP). Ser98 is modified (phosphoserine). LRR repeat units lie at residues 442 to 463 (DVRV…EQLL), 464 to 486 (LVTH…AALR), 487 to 508 (CLEV…ANLP), 509 to 530 (RLRE…QTLA), and 534 to 555 (RLVF…RERL).

Belongs to the protein prenyltransferase subunit alpha family. In terms of assembly, heterotrimer composed of RABGGTA, RABGGTB and CHM; within this trimer, RABGGTA and RABGGTB form the catalytic component B, while CHM (component A) mediates peptide substrate binding. The Rab GGTase dimer (RGGT) interacts with CHM (component A) prior to Rab protein binding; the association is stabilized by geranylgeranyl pyrophosphate (GGpp). The CHM:RGGT:Rab complex is destabilized by GGpp. Interacts with non-phosphorylated form of RAB8A; phosphorylation of RAB8A at 'Thr-72' disrupts this interaction.

The catalysed reaction is geranylgeranyl diphosphate + L-cysteinyl-[protein] = S-geranylgeranyl-L-cysteinyl-[protein] + diphosphate. The enzymatic reaction requires the aid of a Rab escort protein (also called component A), such as CHM. Its function is as follows. Catalyzes the transfer of a geranylgeranyl moiety from geranylgeranyl diphosphate to both cysteines of Rab proteins with the C-terminal sequence -XXCC, -XCXC and -CCXX, such as RAB1A, RAB3A, RAB5A and RAB7A. The polypeptide is Geranylgeranyl transferase type-2 subunit alpha (Rabggta) (Mus musculus (Mouse)).